Consider the following 204-residue polypeptide: THO complex subunit 7 homolog (204 aa).

Gly-2 is subject to N-acetylglycine. Position 5 is a phosphothreonine (Thr-5). The residue at position 36 (Lys-36) is an N6-acetyllysine. The segment at 50 to 137 (YQRMLSTLSQ…HHPDRHETLK (88 aa)) is interaction with THOC5. The interval 105–204 (QILQAKRIRK…ESTMEADPKP (100 aa)) is interaction with NIF3L1. Positions 146 to 204 (LEHLSHIKESVEDKLELRRKQFHVLLSTIHELQQTLENDDKLSEVDEAQESTMEADPKP) form a coiled coil. The interval 182–204 (ENDDKLSEVDEAQESTMEADPKP) is disordered.

This sequence belongs to the THOC7 family. As to quaternary structure, tetramer; as part of a THO-DDX39B complex. Component of the THO subcomplex, which is composed of THOC1, THOC2, THOC3, THOC5, THOC6 and THOC7. Component of the transcription/export (TREX) complex at least composed of ALYREF/THOC4, DDX39B, SARNP/CIP29, CHTOP and the THO subcomplex; in the complex interacts with THOC1, THOC2 and THOC5; forms a coiled-coil dimer with THOC5; together with THOC5 and THOC6, plays a key structural role in the oligomerization of the THO-DDX39B complex. TREX seems to have a dynamic structure involving ATP-dependent remodeling. Interacts with NIF3L1. Ubiquitously expressed.

The protein resides in the cytoplasm. The protein localises to the nucleus. It localises to the nucleus speckle. Component of the THO subcomplex of the TREX complex which is thought to couple mRNA transcription, processing and nuclear export, and which specifically associates with spliced mRNA and not with unspliced pre-mRNA. Required for efficient export of polyadenylated RNA. Plays a key structural role in the oligomerization of the THO-DDX39B complex. TREX is recruited to spliced mRNAs by a transcription-independent mechanism, binds to mRNA upstream of the exon-junction complex (EJC) and is recruited in a splicing- and cap-dependent manner to a region near the 5' end of the mRNA where it functions in mRNA export to the cytoplasm via the TAP/NXF1 pathway. The protein is THO complex subunit 7 homolog (Thoc7) of Mus musculus (Mouse).